Reading from the N-terminus, the 210-residue chain is Orotate phosphoribosyltransferase (210 aa).

5-phospho-alpha-D-ribose 1-diphosphate is bound by residues Arg-96, Lys-100, His-102, and 122–130; that span reads EDLISTGGS. Residue Ser-126 participates in orotate binding.

Belongs to the purine/pyrimidine phosphoribosyltransferase family. PyrE subfamily. Homodimer. Mg(2+) serves as cofactor.

The catalysed reaction is orotidine 5'-phosphate + diphosphate = orotate + 5-phospho-alpha-D-ribose 1-diphosphate. The protein operates within pyrimidine metabolism; UMP biosynthesis via de novo pathway; UMP from orotate: step 1/2. Its function is as follows. Catalyzes the transfer of a ribosyl phosphate group from 5-phosphoribose 1-diphosphate to orotate, leading to the formation of orotidine monophosphate (OMP). The protein is Orotate phosphoribosyltransferase of Streptococcus pneumoniae serotype 4 (strain ATCC BAA-334 / TIGR4).